Reading from the N-terminus, the 708-residue chain is Glycine--tRNA ligase beta subunit (708 aa).

It belongs to the class-II aminoacyl-tRNA synthetase family. Tetramer of two alpha and two beta subunits.

It is found in the cytoplasm. It catalyses the reaction tRNA(Gly) + glycine + ATP = glycyl-tRNA(Gly) + AMP + diphosphate. The protein is Glycine--tRNA ligase beta subunit of Paracidovorax citrulli (strain AAC00-1) (Acidovorax citrulli).